We begin with the raw amino-acid sequence, 97 residues long: Scorpine-like peptide Ev37 (97 aa).

The N-terminal stretch at 1-19 (MNSKLTVIVLLALITIASC) is a signal peptide. In terms of domain architecture, BetaSPN-type CS-alpha/beta spans 55–95 (QNLCAFNVDTVGMCDADCKRQGKAKGVCHGTKCKCDVELSY). 3 disulfide bridges follow: Cys-58/Cys-82, Cys-68/Cys-87, and Cys-72/Cys-89.

It belongs to the long chain scorpion toxin family. Class 3 subfamily. Expressed by the venom gland.

It is found in the secreted. Selectively inhibits Kv1.3/KCNA3 channel (IC(50)=0.95 uM). Both N-terminal and C-terminal domains are likely involved in the interaction with Kv1.3/KCNA3, since neither its N-terminal domain (1-36) nor its C-terminal domain (37-78) block Kv1.3/KCNA3 channel. This chain is Scorpine-like peptide Ev37, found in Euscorpiops validus (Scorpion).